Reading from the N-terminus, the 602-residue chain is Aspartate--tRNA(Asp/Asn) ligase (602 aa).

Residue Glu-175 participates in L-aspartate binding. Residues 199 to 202 (QIFK) are aspartate. Arg-221 is an L-aspartate binding site. Residues 221 to 223 (RDE) and Gln-230 each bind ATP. His-458 provides a ligand contact to L-aspartate. Glu-492 contributes to the ATP binding site. Arg-499 contributes to the L-aspartate binding site. 544–547 (GLDR) is an ATP binding site.

Belongs to the class-II aminoacyl-tRNA synthetase family. Type 1 subfamily. In terms of assembly, homodimer.

Its subcellular location is the cytoplasm. The enzyme catalyses tRNA(Asx) + L-aspartate + ATP = L-aspartyl-tRNA(Asx) + AMP + diphosphate. Aspartyl-tRNA synthetase with relaxed tRNA specificity since it is able to aspartylate not only its cognate tRNA(Asp) but also tRNA(Asn). Reaction proceeds in two steps: L-aspartate is first activated by ATP to form Asp-AMP and then transferred to the acceptor end of tRNA(Asp/Asn). This chain is Aspartate--tRNA(Asp/Asn) ligase, found in Cupriavidus taiwanensis (strain DSM 17343 / BCRC 17206 / CCUG 44338 / CIP 107171 / LMG 19424 / R1) (Ralstonia taiwanensis (strain LMG 19424)).